The following is a 344-amino-acid chain: Cathepsin B-like cysteine proteinase 5 (344 aa).

A signal peptide spans 1–15 (MWKLSAILLVAAASA). A propeptide spanning residues 16–81 (VVIPGHREAP…DIVATEVSDA (66 aa)) is cleaved from the precursor. 6 cysteine pairs are disulfide-bonded: cysteine 95–cysteine 124, cysteine 107–cysteine 154, cysteine 143–cysteine 213, cysteine 144–cysteine 150, cysteine 183–cysteine 217, and cysteine 191–cysteine 203. Cysteine 110 is a catalytic residue. Catalysis depends on residues histidine 286 and asparagine 306.

This sequence belongs to the peptidase C1 family.

This chain is Cathepsin B-like cysteine proteinase 5 (cpr-5), found in Caenorhabditis elegans.